The following is a 95-amino-acid chain: Osteocalcin (95 aa).

Residues 1 to 23 (MRTIFLLTLLTLAALCLSDLTDA) form the signal peptide. The propeptide occupies 24–49 (KPSGPESDKAFMSKQEGNKVVNRLRR). The 47-residue stretch at 46-92 (RLRRYLGASVPSPDPLEPTREQCELNPACDELSDQYGLKTAYKRIYG) folds into the Gla domain. Positions 62, 66, 69, and 75 each coordinate Ca(2+). 4-carboxyglutamate occurs at positions 62, 66, and 69. Cysteine 68 and cysteine 74 are oxidised to a cystine.

Belongs to the osteocalcin/matrix Gla protein family. In terms of processing, gamma-carboxyglutamate residues are formed by vitamin K dependent carboxylation by GGCX. These residues are essential for the binding of calcium. Carboxylated in a Ptprv/Esp-dependent process. Decarboxylation promotes the hormone activity. As to expression, bone.

The protein resides in the secreted. The carboxylated form is one of the main organic components of the bone matrix, which constitutes 1-2% of the total bone protein: it acts as a negative regulator of bone formation and is required to limit bone formation without impairing bone resorption or mineralization. The carboxylated form binds strongly to apatite and calcium. In terms of biological role, the uncarboxylated form acts as a hormone secreted by osteoblasts, which regulates different cellular processes, such as energy metabolism, male fertility and brain development. Regulates of energy metabolism by acting as a hormone favoring pancreatic beta-cell proliferation, insulin secretion and sensitivity and energy expenditure. Uncarboxylated osteocalcin hormone also promotes testosterone production in the testes: acts as a ligand for G protein-coupled receptor GPRC6A at the surface of Leydig cells, initiating a signaling response that promotes the expression of enzymes required for testosterone synthesis in a CREB-dependent manner. Also acts as a regulator of brain development: osteocalcin hormone crosses the blood-brain barrier and acts as a ligand for GPR158 on neurons, initiating a signaling response that prevents neuronal apoptosis in the hippocampus, favors the synthesis of all monoamine neurotransmitters and inhibits that of gamma-aminobutyric acid (GABA). Osteocalcin also crosses the placenta during pregnancy and maternal osteocalcin is required for fetal brain development. The chain is Osteocalcin from Mus musculus (Mouse).